A 189-amino-acid polypeptide reads, in one-letter code: Recombination protein RecR (189 aa).

A C4-type zinc finger spans residues 48-63; it reads CQTCFHLSAEPLCDIC. One can recognise a Toprim domain in the interval 71 to 165; sequence QLLCVVADSR…QVSRIAYGLP (95 aa).

The protein belongs to the RecR family.

Functionally, may play a role in DNA repair. It seems to be involved in an RecBC-independent recombinational process of DNA repair. It may act with RecF and RecO. This chain is Recombination protein RecR, found in Prochlorococcus marinus (strain MIT 9303).